A 340-amino-acid chain; its full sequence is Uroporphyrinogen decarboxylase (340 aa).

Substrate contacts are provided by residues 21–25 (RQAGR), phenylalanine 40, aspartate 71, tyrosine 146, serine 201, and histidine 316.

This sequence belongs to the uroporphyrinogen decarboxylase family. Homodimer.

It localises to the cytoplasm. The enzyme catalyses uroporphyrinogen III + 4 H(+) = coproporphyrinogen III + 4 CO2. Its pathway is porphyrin-containing compound metabolism; protoporphyrin-IX biosynthesis; coproporphyrinogen-III from 5-aminolevulinate: step 4/4. In terms of biological role, catalyzes the decarboxylation of four acetate groups of uroporphyrinogen-III to yield coproporphyrinogen-III. The polypeptide is Uroporphyrinogen decarboxylase (Rickettsia bellii (strain RML369-C)).